Consider the following 141-residue polypeptide: Hemoglobin subunit alpha-1/2 (141 aa).

One can recognise a Globin domain in the interval 1-141 (VLSPADKTNV…VSTVLTSKYR (141 aa)). The residue at position 3 (serine 3) is a Phosphoserine. Lysine 7 is modified (N6-succinyllysine). A Phosphothreonine modification is found at threonine 8. Lysine 11 carries the post-translational modification N6-succinyllysine. Lysine 16 is modified (N6-acetyllysine; alternate). Lysine 16 carries the post-translational modification N6-succinyllysine; alternate. The residue at position 24 (tyrosine 24) is a Phosphotyrosine. Residue serine 35 is modified to Phosphoserine. N6-succinyllysine is present on lysine 40. At serine 49 the chain carries Phosphoserine. Residue histidine 58 coordinates O2. Histidine 87 contributes to the heme b binding site. The residue at position 102 (serine 102) is a Phosphoserine. Threonine 108 carries the phosphothreonine modification. At serine 124 the chain carries Phosphoserine. Threonine 134 and threonine 137 each carry phosphothreonine. Serine 138 is subject to Phosphoserine.

The protein belongs to the globin family. As to quaternary structure, heterotetramer of two alpha chains and two beta chains. Red blood cells.

In terms of biological role, involved in oxygen transport from the lung to the various peripheral tissues. This chain is Hemoglobin subunit alpha-1/2, found in Mustela putorius (European polecat).